A 270-amino-acid polypeptide reads, in one-letter code: Ribitol operon repressor (270 aa).

In terms of domain architecture, HTH lacI-type spans 1–61 (MKKITIYDLA…INRQASMLRS (61 aa)). The H-T-H motif DNA-binding region spans 6 to 25 (IYDLAELSGVSASAVSAILN).

Its function is as follows. Repressor for the genes of the ribitol operon. Binds D-ribulose as an inducer. The chain is Ribitol operon repressor (rbtR) from Klebsiella aerogenes (Enterobacter aerogenes).